The primary structure comprises 358 residues: MSLRTPPLFDAHTDAGAKLTEFGGWEMPVEFDSIRTEHDAVRESAGKFDISHMGEIEVSGPDAAALTNRLTTNDVASLAPGEATYAGITDDDGVLLDDTVVYRLPDGATYLFVPNAGNDELMAERWRSFADRWDLAATVDNATDDYAMVALQGPDALELLSSLDVDVFDLSRFEAAERTVAGVDCLVSRTGYTGEDGVELLFETAAAETVWSALDCQPCGLGARDTLRLEAGFLLGGNEFDPETNPRTPYEANIGFAVDLGTEFVGSDALAAQREAGPDERLVGLRLQDRGIARHGHDIVAAGDVVGEVTSGTMSPTLGAAIALGYVPVEYTEPGTELAVVVRGDEKDAVVEALPFYE.

This sequence belongs to the GcvT family. The glycine cleavage system is composed of four proteins: P, T, L and H.

The catalysed reaction is N(6)-[(R)-S(8)-aminomethyldihydrolipoyl]-L-lysyl-[protein] + (6S)-5,6,7,8-tetrahydrofolate = N(6)-[(R)-dihydrolipoyl]-L-lysyl-[protein] + (6R)-5,10-methylene-5,6,7,8-tetrahydrofolate + NH4(+). Its function is as follows. The glycine cleavage system catalyzes the degradation of glycine. The chain is Probable aminomethyltransferase from Natronomonas pharaonis (strain ATCC 35678 / DSM 2160 / CIP 103997 / JCM 8858 / NBRC 14720 / NCIMB 2260 / Gabara) (Halobacterium pharaonis).